Consider the following 444-residue polypeptide: Aspartate--tRNA(Asp/Asn) ligase (444 aa).

Glutamate 176 contacts L-aspartate. The interval glutamine 198–lysine 201 is aspartate. Arginine 220 is an L-aspartate binding site. Residues arginine 220–glutamate 222, arginine 228–leucine 230, and glutamate 367 each bind ATP. Residues glutamate 367 and serine 370 each contribute to the Mg(2+) site. L-aspartate is bound by residues serine 370 and arginine 374. Glycine 415 to arginine 418 provides a ligand contact to ATP.

Belongs to the class-II aminoacyl-tRNA synthetase family. Type 2 subfamily. As to quaternary structure, homodimer. Requires Mg(2+) as cofactor.

It localises to the cytoplasm. It catalyses the reaction tRNA(Asx) + L-aspartate + ATP = L-aspartyl-tRNA(Asx) + AMP + diphosphate. Functionally, aspartyl-tRNA synthetase with relaxed tRNA specificity since it is able to aspartylate not only its cognate tRNA(Asp) but also tRNA(Asn). Reaction proceeds in two steps: L-aspartate is first activated by ATP to form Asp-AMP and then transferred to the acceptor end of tRNA(Asp/Asn). This is Aspartate--tRNA(Asp/Asn) ligase from Methanosarcina acetivorans (strain ATCC 35395 / DSM 2834 / JCM 12185 / C2A).